A 299-amino-acid polypeptide reads, in one-letter code: ATP phosphoribosyltransferase (299 aa).

It belongs to the ATP phosphoribosyltransferase family. Long subfamily. In terms of assembly, equilibrium between an active dimeric form, an inactive hexameric form and higher aggregates. Interconversion between the various forms is largely reversible and is influenced by the natural substrates and inhibitors of the enzyme. Mg(2+) is required as a cofactor.

The protein resides in the cytoplasm. The catalysed reaction is 1-(5-phospho-beta-D-ribosyl)-ATP + diphosphate = 5-phospho-alpha-D-ribose 1-diphosphate + ATP. The protein operates within amino-acid biosynthesis; L-histidine biosynthesis; L-histidine from 5-phospho-alpha-D-ribose 1-diphosphate: step 1/9. With respect to regulation, feedback inhibited by histidine. In terms of biological role, catalyzes the condensation of ATP and 5-phosphoribose 1-diphosphate to form N'-(5'-phosphoribosyl)-ATP (PR-ATP). Has a crucial role in the pathway because the rate of histidine biosynthesis seems to be controlled primarily by regulation of HisG enzymatic activity. This Buchnera aphidicola subsp. Acyrthosiphon pisum (strain 5A) protein is ATP phosphoribosyltransferase.